The following is a 270-amino-acid chain: Formamidopyrimidine-DNA glycosylase (270 aa).

Pro2 (schiff-base intermediate with DNA) is an active-site residue. Catalysis depends on Glu3, which acts as the Proton donor. The Proton donor; for beta-elimination activity role is filled by Lys56. The DNA site is built by His89, Arg107, and Arg151. An FPG-type zinc finger spans residues 236 to 270; sequence TVYGRAGEPCRVCATPIRLLRQGQRSTYYCPNCQK. Arg260 acts as the Proton donor; for delta-elimination activity in catalysis.

The protein belongs to the FPG family. In terms of assembly, monomer. The cofactor is Zn(2+).

It catalyses the reaction Hydrolysis of DNA containing ring-opened 7-methylguanine residues, releasing 2,6-diamino-4-hydroxy-5-(N-methyl)formamidopyrimidine.. It carries out the reaction 2'-deoxyribonucleotide-(2'-deoxyribose 5'-phosphate)-2'-deoxyribonucleotide-DNA = a 3'-end 2'-deoxyribonucleotide-(2,3-dehydro-2,3-deoxyribose 5'-phosphate)-DNA + a 5'-end 5'-phospho-2'-deoxyribonucleoside-DNA + H(+). Its function is as follows. Involved in base excision repair of DNA damaged by oxidation or by mutagenic agents. Acts as a DNA glycosylase that recognizes and removes damaged bases. Has a preference for oxidized purines, such as 7,8-dihydro-8-oxoguanine (8-oxoG). Has AP (apurinic/apyrimidinic) lyase activity and introduces nicks in the DNA strand. Cleaves the DNA backbone by beta-delta elimination to generate a single-strand break at the site of the removed base with both 3'- and 5'-phosphates. This is Formamidopyrimidine-DNA glycosylase from Variovorax paradoxus (strain S110).